Here is a 290-residue protein sequence, read N- to C-terminus: uncharacterized protein (290 aa).

This is an uncharacterized protein from Ictalurid herpesvirus 1 (strain Auburn) (IcHV-1).